The sequence spans 167 residues: Transcription factor E (167 aa).

One can recognise an HTH TFE/IIEalpha-type domain in the interval 5–87 (ENPIHRAYLL…LWKICPESLD (83 aa)).

Belongs to the TFE family. Monomer. Interaction with RNA polymerase subunits RpoF and RpoE is necessary for Tfe stimulatory transcription activity. Able to interact with Tbp and RNA polymerase in the absence of DNA promoter. Interacts both with the preinitiation and elongation complexes.

In terms of biological role, transcription factor that plays a role in the activation of archaeal genes transcribed by RNA polymerase. Facilitates transcription initiation by enhancing TATA-box recognition by TATA-box-binding protein (Tbp), and transcription factor B (Tfb) and RNA polymerase recruitment. Not absolutely required for transcription in vitro, but particularly important in cases where Tbp or Tfb function is not optimal. It dynamically alters the nucleic acid-binding properties of RNA polymerases by stabilizing the initiation complex and destabilizing elongation complexes. Seems to translocate with the RNA polymerase following initiation and acts by binding to the non template strand of the transcription bubble in elongation complexes. This chain is Transcription factor E, found in Methanothrix thermoacetophila (strain DSM 6194 / JCM 14653 / NBRC 101360 / PT) (Methanosaeta thermophila).